A 187-amino-acid polypeptide reads, in one-letter code: Dirigent protein 6 (187 aa).

Residues 1 to 29 (MAFLVEKQLFKALFSFFLLVLLFSDTVLS) form the signal peptide. C40 and C186 are joined by a disulfide. Residues N59 and N123 are each glycosylated (N-linked (GlcNAc...) asparagine).

Belongs to the plant dirigent protein family. Homodimer. As to expression, expressed in roots, cotyledon veins, leaf trichomes, flowers, siliques, and meristems. Present in interfascicular/vascular cambia and developing xylem.

It localises to the secreted. It is found in the extracellular space. Its subcellular location is the apoplast. Its function is as follows. Dirigent proteins impart stereoselectivity on the phenoxy radical-coupling reaction, yielding optically active lignans from two molecules of coniferyl alcohol in the biosynthesis of lignans, flavonolignans, and alkaloids and thus plays a central role in plant secondary metabolism. Enantiocomplementary dirigent protein that mediates the laccase-catalyzed enantioselective oxidative phenol coupling of (E)-coniferyl alcohol to (-)-pinoresinol. This Arabidopsis thaliana (Mouse-ear cress) protein is Dirigent protein 6 (DIR6).